The chain runs to 369 residues: Transmembrane protein 198 (369 aa).

A run of 7 helical transmembrane segments spans residues 37 to 57 (VVPS…CFFG), 60 to 80 (CFKA…IFLL), 93 to 113 (VEAS…VTML), 117 to 137 (VGLF…TLIG), 148 to 168 (SVWV…VLTL), 181 to 201 (VFGA…FALV), and 216 to 236 (VCWT…LGVL). Positions 266-308 (RQKEERRESSRKKKRKQPQSAQHTHAAKALHPEPAYRRKPNPI) are disordered.

The protein belongs to the TMEM198 family.

It is found in the membrane. The sequence is that of Transmembrane protein 198 (tmem198ab) from Danio rerio (Zebrafish).